A 37-amino-acid polypeptide reads, in one-letter code: Large ribosomal subunit protein bL36 (37 aa).

Belongs to the bacterial ribosomal protein bL36 family.

The protein is Large ribosomal subunit protein bL36 of Marinomonas sp. (strain MWYL1).